Consider the following 200-residue polypeptide: 3-isopropylmalate dehydratase small subunit (200 aa).

Belongs to the LeuD family. LeuD type 1 subfamily. Heterodimer of LeuC and LeuD.

The catalysed reaction is (2R,3S)-3-isopropylmalate = (2S)-2-isopropylmalate. Its pathway is amino-acid biosynthesis; L-leucine biosynthesis; L-leucine from 3-methyl-2-oxobutanoate: step 2/4. In terms of biological role, catalyzes the isomerization between 2-isopropylmalate and 3-isopropylmalate, via the formation of 2-isopropylmaleate. This is 3-isopropylmalate dehydratase small subunit from Aliivibrio salmonicida (strain LFI1238) (Vibrio salmonicida (strain LFI1238)).